The sequence spans 235 residues: Transcriptional regulatory protein CseB (235 aa).

In terms of domain architecture, Response regulatory spans 6-119 (HVLFVEDDDV…VLVARIRAVL (114 aa)). Asp-55 is modified (4-aspartylphosphate). A DNA-binding region (ompR/PhoB-type) is located at residues 141-235 (GGVLTFGELE…VRGFGYKLKA (95 aa)).

In terms of processing, phosphorylated by CseC.

The protein resides in the cytoplasm. Member of the two-component regulatory system CseB/CseC involved in the stability of the cell envelope. CseB activates transcription of RNA polymerase sigma-E factor, in response to changes in the cell envelope. The polypeptide is Transcriptional regulatory protein CseB (cseB) (Streptomyces avermitilis (strain ATCC 31267 / DSM 46492 / JCM 5070 / NBRC 14893 / NCIMB 12804 / NRRL 8165 / MA-4680)).